Here is a 126-residue protein sequence, read N- to C-terminus: Protein C10 (126 aa).

Alanine 2 carries the post-translational modification N-acetylalanine.

It belongs to the UPF0456 family. In terms of tissue distribution, ubiquitously expressed, with higher expression in lung and fetal brain.

It localises to the cytoplasm. In terms of biological role, in brain, may be required for corpus callosum development. The protein is Protein C10 (C12orf57) of Homo sapiens (Human).